We begin with the raw amino-acid sequence, 81 residues long: Antimicrobial peptide Con22 (81 aa).

The first 22 residues, 1 to 22, serve as a signal peptide directing secretion; it reads MNAKVMLVCLLVTMLVMEPAEA. The propeptide occupies 66-81; sequence EAGQIPFDEFMNVLYS.

Belongs to the non-disulfide-bridged peptide (NDBP) superfamily. Long chain multifunctional peptide (group 2) family. In terms of tissue distribution, expressed by the venom gland.

Its subcellular location is the secreted. It is found in the target cell membrane. At high concentrations, acts as a pore former in cellular membranes and causes the leakage of the cells. At submicromolar concentrations, degranulates granulocytes and has a weak hemolytic activity against human erythrocytes. Also strongly inhibits the production of superoxide anions. Has a strong antibacterial activity against Gram-negative bacteria but is less active against Gram-positive bacteria. Also has antifungal activity. This chain is Antimicrobial peptide Con22, found in Urodacus yaschenkoi (Inland robust scorpion).